The following is a 590-amino-acid chain: Ras-specific guanine nucleotide-releasing factor RalGPS2 (590 aa).

The 239-residue stretch at 49 to 287 (TPEEYAGQIT…YKLSLKIEPG (239 aa)) folds into the Ras-GEF domain. The tract at residues 288 to 319 (ASTPRSAASREDLAGPDIGASPQGGRKSSAAA) is disordered. Phosphoserine occurs at positions 293, 296, and 308. Positions 331 to 334 (PQTP) match the PXXP motif. At Thr333 the chain carries Phosphothreonine. Ser336 and Ser350 each carry phosphoserine. Position 368 is a phosphothreonine (Thr368). The segment at 380 to 413 (DSVMEPHAPSRGQAESSTLSSGISIGSSDGSELS) is disordered. Ser381 carries the post-translational modification Phosphoserine. Residues 394-410 (ESSTLSSGISIGSSDGS) are compositionally biased toward low complexity. Position 429 is a phosphoserine (Ser429). The region spanning 464-576 (AVTIQGVLRR…WFKHLSAACQ (113 aa)) is the PH domain. The required for stimulation of nucleotide exchange by RALA stretch occupies residues 466–590 (TIQGVLRRKT…QVPTNLMTFE (125 aa)).

In terms of assembly, interacts with RALA. Interacts with the SH3 domains of GRB2 and PLCG1. As to expression, abundant in brain and testis.

The protein localises to the cytoplasm. It localises to the cell membrane. In terms of biological role, guanine nucleotide exchange factor for the small GTPase RALA. May be involved in cytoskeletal organization. May also be involved in the stimulation of transcription in a Ras-independent fashion. The protein is Ras-specific guanine nucleotide-releasing factor RalGPS2 (Ralgps2) of Mus musculus (Mouse).